Here is a 392-residue protein sequence, read N- to C-terminus: Speckle-type POZ protein-like (392 aa).

The region spanning lysine 31–valine 161 is the MATH domain. In terms of domain architecture, BTB spans threonine 200–aspartate 267.

The protein belongs to the Tdpoz family. Homodimer. Heterodimer with SPOP. Component of cullin-RING-based BCR (BTB-CUL3-RBX1) E3 ubiquitin-protein ligase complexes containing homodimeric SPOPL or the heterodimer formed by SPOP and SPOPL. Interacts with CUL3 and MACROH2A1.

The protein localises to the nucleus. It participates in protein modification; protein ubiquitination. Component of a cullin-RING-based BCR (BTB-CUL3-RBX1) E3 ubiquitin-protein ligase complex that mediates the ubiquitination and subsequent proteasomal degradation of target proteins, but with relatively low efficiency. Cullin-RING-based BCR (BTB-CUL3-RBX1) E3 ubiquitin-protein ligase complexes containing homodimeric SPOPL or the heterodimer formed by SPOP and SPOPL are less efficient than ubiquitin ligase complexes containing only SPOP. May function to down-regulate the activity of cullin-RING-based BCR (BTB-CUL3-RBX1) E3 ubiquitin-protein ligase complexes that contain SPOP. This is Speckle-type POZ protein-like (Spopl) from Mus musculus (Mouse).